The following is a 325-amino-acid chain: Neural proliferation differentiation and control protein 1 (325 aa).

The signal sequence occupies residues 1 to 34 (MATPLPPPSPRHLRLLRLLLSGLVLGAALRGAAA). The segment at 138–175 (QGLELGLPSTPGTPTPTPHTSLGSPVSSDPVHMSPLEP) is disordered. Residues 182 to 202 (GLALVLILAFCVAGAAALSVA) traverse the membrane as a helical segment. Serine 229 bears the Phosphoserine mark. The tract at residues 266-290 (EPPKELDTASSDEENEDGDFTVYEC) is disordered. A compositionally biased stretch (acidic residues) spans 275–284 (SSDEENEDGD).

Belongs to the NPDC1/cab-1 family. Strongly expressed in adult brain; especially in hippocampus, frontal lobe and temporal lobe.

It is found in the membrane. In terms of biological role, suppresses oncogenic transformation in neural and non-neural cells and down-regulates neural cell proliferation. Might be involved in transcriptional regulation. The chain is Neural proliferation differentiation and control protein 1 (NPDC1) from Homo sapiens (Human).